The sequence spans 94 residues: Neutrophil defensin 6 (94 aa).

Residues methionine 1–alanine 19 form the signal peptide. Positions lysine 20–alanine 61 are excised as a propeptide. 3 disulfide bridges follow: cysteine 65–cysteine 93, cysteine 67–cysteine 82, and cysteine 72–cysteine 92.

Belongs to the alpha-defensin family.

It is found in the secreted. Functionally, defensins 6 and 7 have bacteriostatic activity against Gram-positive bacteria S.aureus and L.monocytogenes and Gram-negative bacterium E.coli and antifungal activity against C.neoformans. Defensin 7 has microbicidial activity against Gram-positive bacteria S.aureus and L.monocytogenes. This Macaca mulatta (Rhesus macaque) protein is Neutrophil defensin 6.